A 237-amino-acid polypeptide reads, in one-letter code: NAD-dependent protein deacetylase (237 aa).

A Deacetylase sirtuin-type domain is found at 1–237 (MQDITQAEAI…TIFAELTIKE (237 aa)). Positions 25, 29, 37, 100, 102, 103, and 118 each coordinate NAD(+). Residues I102 and D103 each coordinate nicotinamide. Residue H118 is the Proton acceptor of the active site. Positions 126, 129, 144, and 147 each coordinate Zn(2+). The NAD(+) site is built by T185, S186, and N209.

It belongs to the sirtuin family. Class U subfamily.

Its subcellular location is the cytoplasm. The catalysed reaction is N(6)-acetyl-L-lysyl-[protein] + NAD(+) + H2O = 2''-O-acetyl-ADP-D-ribose + nicotinamide + L-lysyl-[protein]. NAD-dependent protein deacetylase which modulates the activities of several enzymes which are inactive in their acetylated form. The chain is NAD-dependent protein deacetylase from Enterococcus faecalis (strain ATCC 700802 / V583).